Reading from the N-terminus, the 351-residue chain is Porphobilinogen deaminase (351 aa).

Cysteine 242 is subject to S-(dipyrrolylmethanemethyl)cysteine. In terms of domain architecture, RPE1 insert spans 257 to 306; the sequence is PRHLSKLAYREVLEGNTEALATAAYKSNRTDASTGLTYKLPLEVEFGKVS.

Belongs to the HMBS family. In terms of assembly, monomer. Dipyrromethane serves as cofactor.

The enzyme catalyses 4 porphobilinogen + H2O = hydroxymethylbilane + 4 NH4(+). The protein operates within porphyrin-containing compound metabolism; protoporphyrin-IX biosynthesis; coproporphyrinogen-III from 5-aminolevulinate: step 2/4. Its function is as follows. Tetrapolymerization of the monopyrrole PBG into the hydroxymethylbilane pre-uroporphyrinogen in several discrete steps. In Rickettsia conorii (strain ATCC VR-613 / Malish 7), this protein is Porphobilinogen deaminase.